The primary structure comprises 505 residues: Lysine--tRNA ligase (505 aa).

Mg(2+) is bound by residues Glu415 and Glu422.

It belongs to the class-II aminoacyl-tRNA synthetase family. Homodimer. Requires Mg(2+) as cofactor.

The protein localises to the cytoplasm. The enzyme catalyses tRNA(Lys) + L-lysine + ATP = L-lysyl-tRNA(Lys) + AMP + diphosphate. The polypeptide is Lysine--tRNA ligase (Salmonella paratyphi C (strain RKS4594)).